The following is a 417-amino-acid chain: MPKNVHIIGAGISGLSAAVQLSNAGLPVHVYEATQQAGGRCRSFFDSATNLTIDNGNHLVLSGNQYVRNYARAIGTESGLVGPTSAKFPFVDISTVQRWQVDLGGGRLPTWVFHKARRVPDTRLWDYLKLAPILWAGADELVGNTIPCNGTLYRRLVRPLLLAALNCDPPEGSAGLAGAIVRETLLAGGEACRPLVARDGLSAVLVEPAVKLLERRGATVRLSHKLRKLAKSAEIISELDFGDDKIAVGPDDAVILAVPPRAAATLLPGLKTPTEFRAVVNAHFRFDPPVGADPILGVVGGLVEWLFAYPQRLSVTISNGDRLLDIPREEVVRVIWRDVCEAGGISGELPPWQIVCERRATFQATPEQNALRPGPVTGCKNLFLAGDWTATGLPATIEGSVRSGNRAADLALSETNT.

Belongs to the HpnE family.

The enzyme catalyses squalene + FAD + H2O + H(+) = hydroxysqualene + FADH2. It participates in secondary metabolite biosynthesis; hopanoid biosynthesis. Involved in the biosynthesis of the hopanoid precursor squalene (SQ) from farnesyl diphosphate (FPP). Catalyzes the third (last) step, the reduction of hydroxysqualene (HSQ) to SQ. This is Hydroxysqualene dehydroxylase from Sinorhizobium fredii (strain NBRC 101917 / NGR234).